Here is a 302-residue protein sequence, read N- to C-terminus: Methionyl-tRNA formyltransferase (302 aa).

Position 108–111 (serine 108–proline 111) interacts with (6S)-5,6,7,8-tetrahydrofolate. The span at arginine 276–leucine 288 shows a compositional bias: basic and acidic residues. Residues arginine 276 to alanine 302 are disordered.

The protein belongs to the Fmt family.

The catalysed reaction is L-methionyl-tRNA(fMet) + (6R)-10-formyltetrahydrofolate = N-formyl-L-methionyl-tRNA(fMet) + (6S)-5,6,7,8-tetrahydrofolate + H(+). In terms of biological role, attaches a formyl group to the free amino group of methionyl-tRNA(fMet). The formyl group appears to play a dual role in the initiator identity of N-formylmethionyl-tRNA by promoting its recognition by IF2 and preventing the misappropriation of this tRNA by the elongation apparatus. In Cereibacter sphaeroides (strain ATCC 17029 / ATH 2.4.9) (Rhodobacter sphaeroides), this protein is Methionyl-tRNA formyltransferase.